The primary structure comprises 475 residues: Ribulose bisphosphate carboxylase large chain (475 aa).

A propeptide spanning residues 1–2 (MS) is cleaved from the precursor. P3 carries the post-translational modification N-acetylproline. K14 is subject to N6,N6,N6-trimethyllysine. Residues N123 and T173 each coordinate substrate. The active-site Proton acceptor is K175. K177 lines the substrate pocket. Residues K201, D203, and E204 each contribute to the Mg(2+) site. K201 carries the N6-carboxylysine modification. The active-site Proton acceptor is H294. Residues R295, H327, and S379 each coordinate substrate.

This sequence belongs to the RuBisCO large chain family. Type I subfamily. As to quaternary structure, heterohexadecamer of 8 large chains and 8 small chains. Mg(2+) serves as cofactor.

It localises to the plastid. Its subcellular location is the chloroplast. The catalysed reaction is 2 (2R)-3-phosphoglycerate + 2 H(+) = D-ribulose 1,5-bisphosphate + CO2 + H2O. It catalyses the reaction D-ribulose 1,5-bisphosphate + O2 = 2-phosphoglycolate + (2R)-3-phosphoglycerate + 2 H(+). In terms of biological role, ruBisCO catalyzes two reactions: the carboxylation of D-ribulose 1,5-bisphosphate, the primary event in carbon dioxide fixation, as well as the oxidative fragmentation of the pentose substrate in the photorespiration process. Both reactions occur simultaneously and in competition at the same active site. The protein is Ribulose bisphosphate carboxylase large chain of Huperzia lucidula (Shining clubmoss).